The following is a 399-amino-acid chain: Homoserine O-acetyltransferase (399 aa).

The 310-residue stretch at 63-372 (NAILVCHALT…TDRGHDAFLL (310 aa)) folds into the AB hydrolase-1 domain. S168 serves as the catalytic Nucleophile. R238 is a binding site for substrate. Active-site residues include D334 and H367. Residue D368 coordinates substrate.

This sequence belongs to the AB hydrolase superfamily. MetX family. In terms of assembly, homodimer.

It localises to the cytoplasm. The enzyme catalyses L-homoserine + acetyl-CoA = O-acetyl-L-homoserine + CoA. It participates in amino-acid biosynthesis; L-methionine biosynthesis via de novo pathway; O-acetyl-L-homoserine from L-homoserine: step 1/1. Functionally, transfers an acetyl group from acetyl-CoA to L-homoserine, forming acetyl-L-homoserine. The chain is Homoserine O-acetyltransferase from Nitrobacter hamburgensis (strain DSM 10229 / NCIMB 13809 / X14).